The following is a 403-amino-acid chain: SEC14-like protein 2 (403 aa).

K51 is modified (N6-succinyllysine). Positions 76–249 constitute a CRAL-TRIO domain; the sequence is PPEVIQQYLS…EYGGTMTDPD (174 aa). An N6-succinyllysine mark is found at K253 and K257. In terms of domain architecture, GOLD spans 275 to 383; it reads KQQYEHSVQI…AKKVNFTVEV (109 aa). K393 is modified (N6-succinyllysine).

In terms of assembly, monomer. Widely expressed. Strong expression in liver, brain and prostate.

The protein localises to the cytoplasm. It is found in the nucleus. Functionally, carrier protein. Binds to some hydrophobic molecules and promotes their transfer between the different cellular sites. Binds with high affinity to alpha-tocopherol. Also binds with a weaker affinity to other tocopherols and to tocotrienols. May have a transcriptional activatory activity via its association with alpha-tocopherol. Probably recognizes and binds some squalene structure, suggesting that it may regulate cholesterol biosynthesis by increasing the transfer of squalene to a metabolic active pool in the cell. This chain is SEC14-like protein 2 (SEC14L2), found in Homo sapiens (Human).